Reading from the N-terminus, the 422-residue chain is Acylglycerol kinase, mitochondrial (422 aa).

Position 6 is an N6-acetyllysine (lysine 6). The tract at residues 15-31 is hydrophobic; the sequence is TTAGLCLLTWGGHWLYG. The DAGKc domain maps to 58–199; sequence AQVKKATVFL…LDVLQIKGEK (142 aa). The segment at 249–271 is disordered; sequence QASISYTGPTERPPSEPEETPVQ.

This sequence belongs to the AGK family. As to quaternary structure, component of the TIM22 complex, which core is composed of TIMM22, associated with TIMM10 (TIMM10A and/or TIMM10B), TIMM9, AGK and TIMM29. Interacts with SMIM26. It depends on Mg(2+) as a cofactor.

The protein localises to the mitochondrion inner membrane. It is found in the mitochondrion intermembrane space. It catalyses the reaction a monoacylglycerol + ATP = a monoacyl-sn-glycero-3-phosphate + ADP + H(+). The enzyme catalyses a 1,2-diacyl-sn-glycerol + ATP = a 1,2-diacyl-sn-glycero-3-phosphate + ADP + H(+). The catalysed reaction is an N-acylsphing-4-enine + ATP = an N-acylsphing-4-enine 1-phosphate + ADP + H(+). It carries out the reaction 1-(9Z-octadecenoyl)-sn-glycerol + ATP = 1-(9Z-octadecenoyl)-sn-glycero-3-phosphate + ADP + H(+). It catalyses the reaction 1,2-di-(9Z-octadecenoyl)-sn-glycerol + ATP = 1,2-di-(9Z-octadecenoyl)-sn-glycero-3-phosphate + ADP + H(+). The enzyme catalyses a 1-acyl-sn-glycerol + ATP = a 1-acyl-sn-glycero-3-phosphate + ADP + H(+). The catalysed reaction is 1-hexadecanoyl-sn-glycerol + ATP = 1-hexadecanoyl-sn-glycero-3-phosphate + ADP + H(+). It carries out the reaction a 2-acylglycerol + ATP = a 2-acyl-sn-glycerol 3-phosphate + ADP + H(+). It catalyses the reaction 2-(5Z,8Z,11Z,14Z-eicosatetraenoyl)-glycerol + ATP = 2-(5Z,8Z,11Z,14Z-eicosatetraenoyl)-sn-glycero-3-phosphate + ADP + H(+). The enzyme catalyses 1-(5Z,8Z,11Z,14Z-eicosatetraenoyl)-sn-glycerol + ATP = 1-(5Z,8Z,11Z,14Z-eicosatetraenoyl)-sn-glycero-3-phosphate + ADP + H(+). The catalysed reaction is N-(hexanoyl)sphing-4-enine + ATP = N-hexanoylsphing-4-enine 1-phosphate + ADP + H(+). The protein operates within lipid metabolism; glycerolipid metabolism. Lipid kinase that can phosphorylate both monoacylglycerol and diacylglycerol to form lysophosphatidic acid (LPA) and phosphatidic acid (PA), respectively. Phosphorylates ceramide but not sphingosine. Phosphorylates 1,2-dioleoylglycerol more rapidly than 2,3-dioleoylglycerol. Independently of its lipid kinase activity, acts as a component of the TIM22 complex. The TIM22 complex mediates the import and insertion of multi-pass transmembrane proteins into the mitochondrial inner membrane by forming a twin-pore translocase that uses the membrane potential as the external driving force. In the TIM22 complex, required for the import of a subset of metabolite carriers into mitochondria, such as ANT1/SLC25A4 and SLC25A24, while it is not required for the import of TIMM23. Overexpression increases the formation and secretion of LPA, resulting in transactivation of EGFR and activation of the downstream MAPK signaling pathway, leading to increased cell growth. This Pongo abelii (Sumatran orangutan) protein is Acylglycerol kinase, mitochondrial.